Consider the following 363-residue polypeptide: Probable dual-specificity RNA methyltransferase RlmN (363 aa).

Catalysis depends on E106, which acts as the Proton acceptor. In terms of domain architecture, Radical SAM core spans 112–345 (HEYGNSVCVT…VTIRREQGHD (234 aa)). The cysteines at positions 119 and 350 are disulfide-linked. Residues C126, C130, and C133 each coordinate [4Fe-4S] cluster. Residues 176 to 177 (GE), S208, 231 to 233 (SLH), and N307 contribute to the S-adenosyl-L-methionine site. Catalysis depends on C350, which acts as the S-methylcysteine intermediate.

Belongs to the radical SAM superfamily. RlmN family. [4Fe-4S] cluster serves as cofactor.

It is found in the cytoplasm. The enzyme catalyses adenosine(2503) in 23S rRNA + 2 reduced [2Fe-2S]-[ferredoxin] + 2 S-adenosyl-L-methionine = 2-methyladenosine(2503) in 23S rRNA + 5'-deoxyadenosine + L-methionine + 2 oxidized [2Fe-2S]-[ferredoxin] + S-adenosyl-L-homocysteine. It carries out the reaction adenosine(37) in tRNA + 2 reduced [2Fe-2S]-[ferredoxin] + 2 S-adenosyl-L-methionine = 2-methyladenosine(37) in tRNA + 5'-deoxyadenosine + L-methionine + 2 oxidized [2Fe-2S]-[ferredoxin] + S-adenosyl-L-homocysteine. Functionally, specifically methylates position 2 of adenine 2503 in 23S rRNA and position 2 of adenine 37 in tRNAs. The polypeptide is Probable dual-specificity RNA methyltransferase RlmN (Bacillus velezensis (strain DSM 23117 / BGSC 10A6 / LMG 26770 / FZB42) (Bacillus amyloliquefaciens subsp. plantarum)).